The following is a 381-amino-acid chain: Cytochrome b (381 aa).

The next 4 membrane-spanning stretches (helical) occupy residues 34–54 (FGSH…FLAM), 78–99 (WLIR…YLHI), 114–134 (WNIG…GYVL), and 179–199 (FFAF…IHLL). 2 residues coordinate heme b: His-84 and His-98. Positions 183 and 197 each coordinate heme b. Position 202 (His-202) interacts with a ubiquinone. 4 helical membrane-spanning segments follow: residues 227–247 (YKDL…ALFM), 289–309 (LGGV…PLLH), 321–341 (MTQI…WIGG), and 348–368 (FIMV…IIMP).

This sequence belongs to the cytochrome b family. As to quaternary structure, the cytochrome bc1 complex contains 3 respiratory subunits (MT-CYB, CYC1 and UQCRFS1), 2 core proteins (UQCRC1 and UQCRC2) and probably 6 low-molecular weight proteins. The cofactor is heme b.

Its subcellular location is the mitochondrion inner membrane. Functionally, component of the ubiquinol-cytochrome c reductase complex (complex III or cytochrome b-c1 complex) that is part of the mitochondrial respiratory chain. The b-c1 complex mediates electron transfer from ubiquinol to cytochrome c. Contributes to the generation of a proton gradient across the mitochondrial membrane that is then used for ATP synthesis. The sequence is that of Cytochrome b (mt-cyb) from Carcharhinus porosus (Smalltail shark).